The sequence spans 472 residues: Glycerol-3-phosphate acyltransferase, chloroplastic (472 aa).

A chloroplast-targeting transit peptide spans 1–102; sequence MLVLSSSAPP…EIPVKKEDDN (102 aa). The short motif at 241–246 is the HXXXXD motif element; sequence HQSEAD.

It belongs to the GPAT/DAPAT family.

The protein resides in the plastid. Its subcellular location is the chloroplast stroma. The catalysed reaction is sn-glycerol 3-phosphate + an acyl-CoA = a 1-acyl-sn-glycero-3-phosphate + CoA. It participates in phospholipid metabolism; CDP-diacylglycerol biosynthesis; CDP-diacylglycerol from sn-glycerol 3-phosphate: step 1/3. In terms of biological role, esterifies acyl-group from acyl-ACP to the sn-1 position of glycerol-3-phosphate. The enzyme from chilling-resistant plants discriminates against non-fluid palmitic acid and selects oleic acid whereas the enzyme from sensitive plants accepts both fatty acids. This is an oleate-selective acyltransferase. The protein is Glycerol-3-phosphate acyltransferase, chloroplastic (GAT) of Spinacia oleracea (Spinach).